We begin with the raw amino-acid sequence, 578 residues long: mRNA-decapping enzyme 1B (578 aa).

A2 carries the N-acetylalanine modification. Phosphoserine is present on residues S144 and S145. 2 disordered regions span residues 187–222 and 246–265; these read AICD…PEPQ and RTFA…TRPV. A compositionally biased stretch (basic residues) spans 248–257; that stretch reads FAHHHHHHHQ. Phosphoserine is present on residues S274 and S335. The residue at position 380 (T380) is a Phosphothreonine.

The protein belongs to the DCP1 family. In terms of assembly, interacts with DCP1A.

The protein resides in the cytoplasm. The protein localises to the nucleus. The enzyme catalyses a 5'-end (N(7)-methyl 5'-triphosphoguanosine)-ribonucleoside in mRNA + H2O = N(7)-methyl-GDP + a 5'-end phospho-ribonucleoside in mRNA + 2 H(+). Its function is as follows. May play a role in the degradation of mRNAs, both in normal mRNA turnover and in nonsense-mediated mRNA decay. May remove the 7-methyl guanine cap structure from mRNA molecules, yielding a 5'-phosphorylated mRNA fragment and 7m-GDP. This Mus musculus (Mouse) protein is mRNA-decapping enzyme 1B (Dcp1b).